Consider the following 395-residue polypeptide: ATP phosphoribosyltransferase regulatory subunit (395 aa).

The protein belongs to the class-II aminoacyl-tRNA synthetase family. HisZ subfamily. In terms of assembly, heteromultimer composed of HisG and HisZ subunits.

Its subcellular location is the cytoplasm. It functions in the pathway amino-acid biosynthesis; L-histidine biosynthesis; L-histidine from 5-phospho-alpha-D-ribose 1-diphosphate: step 1/9. In terms of biological role, required for the first step of histidine biosynthesis. May allow the feedback regulation of ATP phosphoribosyltransferase activity by histidine. This chain is ATP phosphoribosyltransferase regulatory subunit, found in Pseudomonas fluorescens (strain Pf0-1).